A 252-amino-acid polypeptide reads, in one-letter code: 3-deoxy-manno-octulosonate cytidylyltransferase (252 aa).

It belongs to the KdsB family.

It is found in the cytoplasm. It catalyses the reaction 3-deoxy-alpha-D-manno-oct-2-ulosonate + CTP = CMP-3-deoxy-beta-D-manno-octulosonate + diphosphate. The protein operates within nucleotide-sugar biosynthesis; CMP-3-deoxy-D-manno-octulosonate biosynthesis; CMP-3-deoxy-D-manno-octulosonate from 3-deoxy-D-manno-octulosonate and CTP: step 1/1. It functions in the pathway bacterial outer membrane biogenesis; lipopolysaccharide biosynthesis. In terms of biological role, activates KDO (a required 8-carbon sugar) for incorporation into bacterial lipopolysaccharide in Gram-negative bacteria. In Thiobacillus denitrificans (strain ATCC 25259 / T1), this protein is 3-deoxy-manno-octulosonate cytidylyltransferase.